The following is a 327-amino-acid chain: GTPase Obg (327 aa).

Positions His2–Ile160 constitute an Obg domain. Residues Ala161–Arg326 enclose the OBG-type G domain. Residues Gly167 to Ser174, Phe192 to Phe196, Asp213 to Gly216, Asn280 to Asp283, and Ser307 to Tyr309 contribute to the GTP site. Mg(2+) is bound by residues Ser174 and Thr194.

The protein belongs to the TRAFAC class OBG-HflX-like GTPase superfamily. OBG GTPase family. As to quaternary structure, monomer. Mg(2+) is required as a cofactor.

It localises to the cytoplasm. Its function is as follows. An essential GTPase which binds GTP, GDP and possibly (p)ppGpp with moderate affinity, with high nucleotide exchange rates and a fairly low GTP hydrolysis rate. Plays a role in control of the cell cycle, stress response, ribosome biogenesis and in those bacteria that undergo differentiation, in morphogenesis control. The chain is GTPase Obg from Borrelia hermsii (strain HS1 / DAH).